The sequence spans 181 residues: Monofunctional chorismate mutase (181 aa).

The first 20 residues, 1–20 (MIRHIAIFLCSLLMCSTTFA), serve as a signal peptide directing secretion. A Chorismate mutase domain is found at 21–102 (DSVTSVSLGA…ASKAIQYRYL (82 aa)). Substrate contacts are provided by Arg-38, Lys-49, Asp-58, Glu-62, and Gln-98.

The protein resides in the periplasm. It carries out the reaction chorismate = prephenate. It functions in the pathway metabolic intermediate biosynthesis; prephenate biosynthesis; prephenate from chorismate: step 1/1. In terms of biological role, catalyzes the Claisen rearrangement of chorismate to prephenate. This chain is Monofunctional chorismate mutase, found in Salmonella typhimurium.